We begin with the raw amino-acid sequence, 1381 residues long: Contactin-associated protein 1 (1381 aa).

An N-terminal signal peptide occupies residues 1-20 (MMSLRLFSILLAAVVSGAQG). Over 21 to 1284 (WGYYGCNEEL…PYYHDDGWIA (1264 aa)) the chain is Extracellular. Positions 26–169 (CNEELVGPLY…IGLRLGIYGC (144 aa)) constitute an F5/8 type C domain. An intrachain disulfide couples Cys26 to Cys169. Residues Asn121, Asn129, and Asn277 are each glycosylated (N-linked (GlcNAc...) asparagine). Laminin G-like domains are found at residues 204–356 (FKTE…AFRC) and 390–539 (FRTW…FDTC). The cysteines at positions 324 and 356 are disulfide-linked. 3 N-linked (GlcNAc...) asparagine glycosylation sites follow: Asn421, Asn500, and Asn519. 4 disulfide bridges follow: Cys507–Cys539, Cys545–Cys556, Cys550–Cys565, and Cys567–Cys577. Residues 544–576 (RCSPNMCEHDGRCYQSWDDFICYCELTGYKGVT) enclose the EGF-like 1 domain. A Fibrinogen C-terminal domain is found at 577-796 (CHEPLYKESC…NTISFRTGAA (220 aa)). 9 N-linked (GlcNAc...) asparagine glycosylation sites follow: Asn598, Asn654, Asn665, Asn764, Asn805, Asn844, Asn861, Asn949, and Asn957. Residues 814-958 (FRTSAPSGVF…NASEGTFPNC (145 aa)) form the Laminin G-like 3 domain. Intrachain disulfides connect Cys931/Cys958, Cys962/Cys975, Cys969/Cys984, and Cys986/Cys996. One can recognise an EGF-like 2 domain in the interval 962 to 996 (CTHPRFPCFHGGRCVERYSYYTCDCDLTAFDGPYC). N-linked (GlcNAc...) asparagine glycans are attached at residues Asn1079 and Asn1148. In terms of domain architecture, Laminin G-like 4 spans 1089–1251 (FSTSSAPAVL…VQGELSESNC (163 aa)). A disulfide bridge links Cys1210 with Cys1251. A helical membrane pass occupies residues 1285–1305 (ILLGFLVAFLLLGLVGMLVLF). Topologically, residues 1306–1381 (YLQNHRYKGS…PQILEESRSE (76 aa)) are cytoplasmic. The tract at residues 1317–1381 (HTNEPKATHD…PQILEESRSE (65 aa)) is disordered. Basic and acidic residues predominate over residues 1319-1329 (NEPKATHDSHP). The short motif at 1329 to 1366 (PGGKAPLPPSGPAQAPAPTPAPTQVPTPAPAPASGPGP) is the SH3-binding element. Positions 1334–1363 (PLPPSGPAQAPAPTPAPTQVPTPAPAPASG) are enriched in pro residues. Ser1380 carries the post-translational modification Phosphoserine.

The protein belongs to the neurexin family. As to quaternary structure, interacts with CNTN1/contactin in cis form. Predominantly expressed in brain. In myelinated nerve fibers of the CNS predominantly found in paranodal axoglial junctions. In unmyelinated nerve fibers of the CNS diffusely distributed along the entire surface. Weak expression is detected in ovary, pancreas, colon, lung, heart, intestine and testis.

It localises to the membrane. Its subcellular location is the cell junction. The protein localises to the paranodal septate junction. Functionally, required, with CNTNAP2, for radial and longitudinal organization of myelinated axons. Plays a role in the formation of functional distinct domains critical for saltatory conduction of nerve impulses in myelinated nerve fibers. Demarcates the paranodal region of the axo-glial junction. In association with contactin involved in the signaling between axons and myelinating glial cells. The chain is Contactin-associated protein 1 (Cntnap1) from Rattus norvegicus (Rat).